A 354-amino-acid polypeptide reads, in one-letter code: MDDKKAGAGVSAEKQKALAAALSQIEKQFGKGSIMRLGDGEVEKDIQVVSTGSLGLDIALGVGGLPRGRVVEIYGPESSGKTTLTLQVVAEMQKLGGTCAFIDAEHALDVNYASKLGVNVGDLLISQPDTGEQALEITDALVRSGSIDLIIIDSVAALVPKAEIEGEMGDSLPGLQARLMSQALRKLTGTIKRTNCLVIFINQIRMKIGVMFGSPETTTGGNALKFYASVRLDIRRIGSIKKGDDVIGNETKVKVVKNKVSPPFREAFFDILYGQGISRQGEIIDLGVDAKIVEKSGAWYSYNGEKIGQGKDNAREYLRENPDIAAEIENKVRAALGVVAMNPTAAAVAATVED.

Residue 75-82 (GPESSGKT) coordinates ATP.

The protein belongs to the RecA family.

The protein resides in the cytoplasm. Can catalyze the hydrolysis of ATP in the presence of single-stranded DNA, the ATP-dependent uptake of single-stranded DNA by duplex DNA, and the ATP-dependent hybridization of homologous single-stranded DNAs. It interacts with LexA causing its activation and leading to its autocatalytic cleavage. The sequence is that of Protein RecA from Cupriavidus taiwanensis (strain DSM 17343 / BCRC 17206 / CCUG 44338 / CIP 107171 / LMG 19424 / R1) (Ralstonia taiwanensis (strain LMG 19424)).